Consider the following 106-residue polypeptide: Terpredoxin (106 aa).

The region spanning 2-106 (PRVVFIDEQS…GLIVRVPLPA (105 aa)) is the 2Fe-2S ferredoxin-type domain. [2Fe-2S] cluster contacts are provided by Cys40, Cys46, Cys49, and Cys87.

This sequence belongs to the adrenodoxin/putidaredoxin family. [2Fe-2S] cluster serves as cofactor.

In terms of biological role, the oxidation of alpha-terpineol by cytochrome p450-TERP requires the participation of a flavoprotein, terpredoxin reductase, and an iron-sulfur protein, terpredoxin, to mediate the transfer of electrons from NADH to P450 for oxygen activation. The chain is Terpredoxin (terPB) from Pseudomonas sp.